A 280-amino-acid polypeptide reads, in one-letter code: NSNNINLSYDDQQRLIYSGTEQKYPTSNQLKSYPNGLLNPFNGTNFMHPTIQSNSLITRHPNNNSFQLNTTNDSNNNNTTNNGNDSRSHLYDISTFNAQNPYSLTNTLNFNSRTMNNQLTMNDSMKLNGNLTLHDTNYHALLNGSTSFGSTVFRSLVNSENQSYLNSSTNMLMNSSLDNINNSNDHSTLNDNNNDCIGQSLRQSGNSSESNVVVYPWMNPKGTDISVDQKRTRQTYTRYQTLELEKEFHFNKYLTRRRRIEIAHTLTLTERQIKIWFQNR.

Residues 61 to 88 (PNNNSFQLNTTNDSNNNNTTNNGNDSRS) are disordered. Residues 69 to 85 (NTTNDSNNNNTTNNGND) show a composition bias toward low complexity. The Antp-type hexapeptide signature appears at 214-219 (VYPWMN). The homeobox DNA-binding region spans 229–280 (QKRTRQTYTRYQTLELEKEFHFNKYLTRRRRIEIAHTLTLTERQIKIWFQNR).

This sequence belongs to the Antp homeobox family.

Its subcellular location is the nucleus. In Schistosoma mansoni (Blood fluke), this protein is Homeobox protein SMOX-1 (SMOX-1).